The primary structure comprises 264 residues: Thymidylate synthase (264 aa).

Arg-21 provides a ligand contact to dUMP. Residue His-51 participates in (6R)-5,10-methylene-5,6,7,8-tetrahydrofolate binding. A dUMP-binding site is contributed by Arg-126 to Arg-127. The active-site Nucleophile is Cys-146. DUMP-binding positions include Arg-166–Asp-169, Asn-177, and His-207–Tyr-209. Asp-169 serves as a coordination point for (6R)-5,10-methylene-5,6,7,8-tetrahydrofolate. Position 263 (Ala-263) interacts with (6R)-5,10-methylene-5,6,7,8-tetrahydrofolate.

This sequence belongs to the thymidylate synthase family. Bacterial-type ThyA subfamily. As to quaternary structure, homodimer.

The protein resides in the cytoplasm. It carries out the reaction dUMP + (6R)-5,10-methylene-5,6,7,8-tetrahydrofolate = 7,8-dihydrofolate + dTMP. The protein operates within pyrimidine metabolism; dTTP biosynthesis. Catalyzes the reductive methylation of 2'-deoxyuridine-5'-monophosphate (dUMP) to 2'-deoxythymidine-5'-monophosphate (dTMP) while utilizing 5,10-methylenetetrahydrofolate (mTHF) as the methyl donor and reductant in the reaction, yielding dihydrofolate (DHF) as a by-product. This enzymatic reaction provides an intracellular de novo source of dTMP, an essential precursor for DNA biosynthesis. The chain is Thymidylate synthase from Yersinia pseudotuberculosis serotype O:1b (strain IP 31758).